The sequence spans 284 residues: Pantothenate synthetase (284 aa).

30–37 contacts ATP; the sequence is MGNLHEGH. The active-site Proton donor is the H37. Q61 is a (R)-pantoate binding site. Q61 is a beta-alanine binding site. 149-152 provides a ligand contact to ATP; the sequence is GEKD. Q155 contributes to the (R)-pantoate binding site. ATP is bound by residues V178 and 186-189; that span reads LSSR.

It belongs to the pantothenate synthetase family. As to quaternary structure, homodimer.

The protein localises to the cytoplasm. It carries out the reaction (R)-pantoate + beta-alanine + ATP = (R)-pantothenate + AMP + diphosphate + H(+). It participates in cofactor biosynthesis; (R)-pantothenate biosynthesis; (R)-pantothenate from (R)-pantoate and beta-alanine: step 1/1. Its function is as follows. Catalyzes the condensation of pantoate with beta-alanine in an ATP-dependent reaction via a pantoyl-adenylate intermediate. The chain is Pantothenate synthetase from Sodalis glossinidius (strain morsitans).